The sequence spans 421 residues: N-succinylarginine dihydrolase (421 aa).

Substrate is bound by residues 19-28, asparagine 105, and 132-133; these read AGLSLGNLAS and HR. Glutamate 167 is a catalytic residue. Residue arginine 199 coordinates substrate. Histidine 235 is a catalytic residue. Residues aspartate 237 and asparagine 346 each coordinate substrate. The active-site Nucleophile is the cysteine 352.

The protein belongs to the succinylarginine dihydrolase family. Homodimer.

The enzyme catalyses N(2)-succinyl-L-arginine + 2 H2O + 2 H(+) = N(2)-succinyl-L-ornithine + 2 NH4(+) + CO2. It participates in amino-acid degradation; L-arginine degradation via AST pathway; L-glutamate and succinate from L-arginine: step 2/5. In terms of biological role, catalyzes the hydrolysis of N(2)-succinylarginine into N(2)-succinylornithine, ammonia and CO(2). In Novosphingobium aromaticivorans (strain ATCC 700278 / DSM 12444 / CCUG 56034 / CIP 105152 / NBRC 16084 / F199), this protein is N-succinylarginine dihydrolase.